The primary structure comprises 382 residues: Prolargin (382 aa).

A signal peptide spans 1-20 (MRSPLCWLLPLLILASVAQG). Positions 19–66 (QGQPTRRPRPGTGPGRRPRPRPRPTPSFPQPDEPAEPTDLPPPLPPGP) are disordered. 2 stretches are compositionally biased toward pro residues: residues 41-50 (RPTPSFPQPD) and 57-66 (DLPPPLPPGP). 12 LRR repeats span residues 95–114 (RKVPVIPPRIHYLYLQNNFI), 115–138 (TELPVESFQNATGLRWINLDNNRI), 139–162 (RKIDQRVLEKLPGLVFLYMEKNQL), 163–183 (EEVPSALPRNLEQLRLSQNHI), 184–207 (SRIPPGVFSKLENLLLLDLQHNRL), 208–233 (SDGVFKPDTFHGLKNLMQLNLAHNIL), 234–254 (RKMPPRVPTAIHQLYLDSNKI), 255–278 (ETIPNGYFKSFPNLAFIRLNYNKL), 279–303 (TDRGLPKNSFNISNLLVLHLSHNRI), 304–323 (SSVPAINNRLEHLYLNNNSI), 324–362 (EKINGTQICPNDLVAFHDFSSDLENVPHLRYLRLDGNYL), and 363–382 (KPPIPLDLMMCFRLLQSVVI). Asparagine 124 is a glycosylation site (N-linked (GlcNAc...) asparagine). Asparagine 289, asparagine 320, and asparagine 327 each carry an N-linked (GlcNAc...) asparagine glycan. Cysteine 332 and cysteine 373 are disulfide-bonded.

This sequence belongs to the small leucine-rich proteoglycan (SLRP) family. SLRP class II subfamily. Binds the basement membrane heparan sulfate proteoglycan perlecan and triple helical collagens type I and type II. Glycosylated; contains heparan sulfate. In terms of tissue distribution, connective tissue.

It localises to the secreted. The protein resides in the extracellular space. Its subcellular location is the extracellular matrix. May anchor basement membranes to the underlying connective tissue. In Homo sapiens (Human), this protein is Prolargin (PRELP).